Here is a 261-residue protein sequence, read N- to C-terminus: Kallikrein 1-related peptidase b8 (261 aa).

A signal peptide spans 1-18; sequence MRFLILFLALSLGGIDAA. Residues 19-24 constitute a propeptide, activation peptide; that stretch reads PPLQSR. The region spanning 25-258 is the Peptidase S1 domain; the sequence is VVGGFNCEKN…FNSWIKDTMT (234 aa). 5 disulfide bridges follow: cysteine 31/cysteine 173, cysteine 50/cysteine 66, cysteine 152/cysteine 219, cysteine 184/cysteine 198, and cysteine 209/cysteine 234. The active-site Charge relay system is the histidine 65. The N-linked (GlcNAc...) asparagine glycan is linked to asparagine 102. Aspartate 120 acts as the Charge relay system in catalysis. The active-site Charge relay system is the serine 213.

The protein belongs to the peptidase S1 family. Kallikrein subfamily.

The enzyme catalyses Preferential cleavage of Arg-|-Xaa bonds in small molecule substrates. Highly selective action to release kallidin (lysyl-bradykinin) from kininogen involves hydrolysis of Met-|-Xaa or Leu-|-Xaa.. In terms of biological role, glandular kallikreins cleave Met-Lys and Arg-Ser bonds in kininogen to release Lys-bradykinin. This Mus musculus (Mouse) protein is Kallikrein 1-related peptidase b8 (Klk1b8).